A 206-amino-acid chain; its full sequence is Large ribosomal subunit protein uL4 (206 aa).

This sequence belongs to the universal ribosomal protein uL4 family. As to quaternary structure, part of the 50S ribosomal subunit.

One of the primary rRNA binding proteins, this protein initially binds near the 5'-end of the 23S rRNA. It is important during the early stages of 50S assembly. It makes multiple contacts with different domains of the 23S rRNA in the assembled 50S subunit and ribosome. Its function is as follows. Forms part of the polypeptide exit tunnel. The sequence is that of Large ribosomal subunit protein uL4 from Cereibacter sphaeroides (strain KD131 / KCTC 12085) (Rhodobacter sphaeroides).